Here is a 211-residue protein sequence, read N- to C-terminus: Urease accessory protein UreG (211 aa).

Glycine 11–threonine 18 provides a ligand contact to GTP.

The protein belongs to the SIMIBI class G3E GTPase family. UreG subfamily. As to quaternary structure, homodimer. UreD, UreF and UreG form a complex that acts as a GTP-hydrolysis-dependent molecular chaperone, activating the urease apoprotein by helping to assemble the nickel containing metallocenter of UreC. The UreE protein probably delivers the nickel.

Its subcellular location is the cytoplasm. Functionally, facilitates the functional incorporation of the urease nickel metallocenter. This process requires GTP hydrolysis, probably effectuated by UreG. This Actinobacillus pleuropneumoniae (Haemophilus pleuropneumoniae) protein is Urease accessory protein UreG.